The primary structure comprises 138 residues: ATP synthase epsilon chain (138 aa).

Belongs to the ATPase epsilon chain family. As to quaternary structure, F-type ATPases have 2 components, CF(1) - the catalytic core - and CF(0) - the membrane proton channel. CF(1) has five subunits: alpha(3), beta(3), gamma(1), delta(1), epsilon(1). CF(0) has four main subunits: a(1), b(1), b'(1) and c(9-12).

It localises to the cellular thylakoid membrane. Functionally, produces ATP from ADP in the presence of a proton gradient across the membrane. In terms of biological role, the complex from the organism is particularly stable to disruption and remains functional after 6 hours at 55 degrees Celsius. The polypeptide is ATP synthase epsilon chain (Thermosynechococcus vestitus (strain NIES-2133 / IAM M-273 / BP-1)).